A 171-amino-acid chain; its full sequence is Myosin regulatory light chain 12B (171 aa).

Thr-18 carries the post-translational modification Phosphothreonine; by MLCK and ZIPK/DAPK3. Ser-19 carries the post-translational modification Phosphoserine; by MLCK and ZIPK/DAPK3. EF-hand domains lie at 28–63 (SQIQEFKEAFNMIDQNRDGFIDKEDLHDMLASLGKN), 97–132 (DPEDVIRNAFACFDEEATGTIQEDYLRELLTTMGDR), and 133–168 (FTDEEVDELYREAPIDKKGNFNYIEFTRILKHGAKD). Ca(2+) is bound by residues Asp-41, Asn-43, Asp-45, and Asp-52.

Myosin is a hexamer of 2 heavy chains and 4 light chains: interacts with myosin heavy chain MYO19. In terms of processing, phosphorylation increases the actin-activated myosin ATPase activity and thereby regulates the contractile activity. It is required to generate the driving force in the migration of the cells but not necessary for localization of myosin-2 at the leading edge. Phosphorylation is reduced following epigallocatechin-3-O-gallate treatment.

Functionally, myosin regulatory subunit that plays an important role in regulation of both smooth muscle and nonmuscle cell contractile activity via its phosphorylation. Phosphorylation triggers actin polymerization in vascular smooth muscle. Implicated in cytokinesis, receptor capping, and cell locomotion. This Bos taurus (Bovine) protein is Myosin regulatory light chain 12B (MYL12B).